The chain runs to 164 residues: Protein-export protein SecB (164 aa).

This sequence belongs to the SecB family. Homotetramer, a dimer of dimers. One homotetramer interacts with 1 SecA dimer.

It localises to the cytoplasm. In terms of biological role, one of the proteins required for the normal export of preproteins out of the cell cytoplasm. It is a molecular chaperone that binds to a subset of precursor proteins, maintaining them in a translocation-competent state. It also specifically binds to its receptor SecA. This Caulobacter sp. (strain K31) protein is Protein-export protein SecB.